An 806-amino-acid polypeptide reads, in one-letter code: Fibroblast growth factor receptor 3 (806 aa).

The first 19 residues, 1–19 (MRAAWGSVWCLCLAAAVGA), serve as a signal peptide directing secretion. The Extracellular segment spans residues 20 to 364 (LPAARRRGAE…ELMEMDDSGS (345 aa)). One can recognise an Ig-like C2-type 1 domain in the interval 24-124 (RRRGAERSGG…VLGNFTVRVT (101 aa)). The cysteines at positions 61 and 107 are disulfide-linked. N-linked (GlcNAc...) asparagine glycans are attached at residues N83, N96, and N118. The segment at 121-146 (VRVTDSPSSGDDEDDDDESEDTGVPF) is disordered. A compositionally biased stretch (acidic residues) spans 130–141 (GDDEDDDDESED). 2 Ig-like C2-type domains span residues 150-238 (PDKM…YQLD) and 247-349 (PILQ…AWLT). C170 and C222 are joined by a disulfide. N-linked (GlcNAc...) asparagine glycosylation is found at N219, N256, N288, N309, and N322. The cysteines at positions 269 and 333 are disulfide-linked. A helical membrane pass occupies residues 365–389 (VYAGILSYGTGLVLFILVLVIVIIC). At 390-806 (RMKMPNKKAM…HVPCNGVIRT (417 aa)) the chain is on the cytoplasmic side. Residues 466 to 755 (LTLGKPLGEG…LTMTSTDEYL (290 aa)) form the Protein kinase domain. ATP contacts are provided by residues 472–480 (LGEGCFGQV) and K502. The active-site Proton acceptor is the D611. Residues Y641, Y642, Y718, and Y754 each carry the phosphotyrosine; by autocatalysis modification.

Belongs to the protein kinase superfamily. Tyr protein kinase family. Fibroblast growth factor receptor subfamily. In terms of assembly, monomer. Homodimer after ligand binding. Autophosphorylated. Binding of FGF family members together with heparan sulfate proteoglycan or heparin promotes receptor dimerization and autophosphorylation on tyrosine residues. Autophosphorylation occurs in trans between the two FGFR molecules present in the dimer.

The protein localises to the cell membrane. It carries out the reaction L-tyrosyl-[protein] + ATP = O-phospho-L-tyrosyl-[protein] + ADP + H(+). Its activity is regulated as follows. Present in an inactive conformation in the absence of bound ligand. Ligand binding leads to dimerization and activation by autophosphorylation on tyrosine residues. Tyrosine-protein kinase that acts as a cell-surface receptor for fibroblast growth factors and plays an essential role in the regulation of cell proliferation, differentiation and apoptosis. Plays an essential role in the regulation of chondrocyte differentiation, proliferation and apoptosis, and is required for normal skeleton development. Regulates both osteogenesis and postnatal bone mineralization by osteoblasts. Promotes apoptosis in chondrocytes, but can also promote cancer cell proliferation. Phosphorylates PLCG1, CBL and FRS2. Ligand binding leads to the activation of several signaling cascades. Activation of PLCG1 leads to the production of the cellular signaling molecules diacylglycerol and inositol 1,4,5-trisphosphate. Phosphorylation of FRS2 triggers recruitment of GRB2, GAB1, PIK3R1 and SOS1, and mediates activation of RAS, MAPK1/ERK2, MAPK3/ERK1 and the MAP kinase signaling pathway, as well as of the AKT1 signaling pathway. In Gallus gallus (Chicken), this protein is Fibroblast growth factor receptor 3 (FGFR3).